Here is a 301-residue protein sequence, read N- to C-terminus: Protein FdhE homolog (301 aa).

It belongs to the FdhE family.

The protein resides in the cytoplasm. In terms of biological role, necessary for formate dehydrogenase activity. The polypeptide is Protein FdhE homolog (Erwinia tasmaniensis (strain DSM 17950 / CFBP 7177 / CIP 109463 / NCPPB 4357 / Et1/99)).